The sequence spans 216 residues: Small ribosomal subunit protein uS2 (216 aa).

It belongs to the universal ribosomal protein uS2 family.

The sequence is that of Small ribosomal subunit protein uS2 from Carsonella ruddii (strain PV).